A 331-amino-acid chain; its full sequence is Protoheme IX farnesyltransferase (331 aa).

The next 8 membrane-spanning stretches (helical) occupy residues Leu63 to Leu83, Ser109 to Val129, Leu132 to Leu152, Ile160 to Gly180, Trp188 to Leu208, Val215 to Val235, Val241 to Leu261, and Ile294 to Val314.

The protein belongs to the UbiA prenyltransferase family. Protoheme IX farnesyltransferase subfamily.

The protein resides in the cell inner membrane. It catalyses the reaction heme b + (2E,6E)-farnesyl diphosphate + H2O = Fe(II)-heme o + diphosphate. The protein operates within porphyrin-containing compound metabolism; heme O biosynthesis; heme O from protoheme: step 1/1. Functionally, converts heme B (protoheme IX) to heme O by substitution of the vinyl group on carbon 2 of heme B porphyrin ring with a hydroxyethyl farnesyl side group. The protein is Protoheme IX farnesyltransferase of Prochlorococcus marinus (strain NATL2A).